The following is a 315-amino-acid chain: Transaldolase (315 aa).

K125 (schiff-base intermediate with substrate) is an active-site residue.

Belongs to the transaldolase family. Type 1 subfamily. In terms of assembly, homodimer.

It localises to the cytoplasm. It carries out the reaction D-sedoheptulose 7-phosphate + D-glyceraldehyde 3-phosphate = D-erythrose 4-phosphate + beta-D-fructose 6-phosphate. Its pathway is carbohydrate degradation; pentose phosphate pathway; D-glyceraldehyde 3-phosphate and beta-D-fructose 6-phosphate from D-ribose 5-phosphate and D-xylulose 5-phosphate (non-oxidative stage): step 2/3. In terms of biological role, transaldolase is important for the balance of metabolites in the pentose-phosphate pathway. The chain is Transaldolase from Polaromonas sp. (strain JS666 / ATCC BAA-500).